Reading from the N-terminus, the 482-residue chain is Adenylyltransferase and sulfurtransferase MOCS3-2 (482 aa).

Residues Gly125, Asp146, 153-157 (NNLHR), Lys170, and 214-215 (DN) contribute to the ATP site. Residues Cys255 and Cys258 each coordinate Zn(2+). The active-site Glycyl thioester intermediate; for adenylyltransferase activity is the Cys272. Residues Cys330 and Cys333 each coordinate Zn(2+). The Rhodanese domain maps to 385 to 480 (DGEPHLLLDV…WGQDVDPDFP (96 aa)). Cys440 serves as the catalytic Cysteine persulfide intermediate; for sulfurtransferase activity.

This sequence in the N-terminal section; belongs to the HesA/MoeB/ThiF family. UBA4 subfamily. Zn(2+) is required as a cofactor.

It is found in the cytoplasm. The catalysed reaction is [molybdopterin-synthase sulfur-carrier protein]-C-terminal Gly-Gly + ATP + H(+) = [molybdopterin-synthase sulfur-carrier protein]-C-terminal Gly-Gly-AMP + diphosphate. It carries out the reaction [molybdopterin-synthase sulfur-carrier protein]-C-terminal Gly-Gly-AMP + S-sulfanyl-L-cysteinyl-[cysteine desulfurase] + AH2 = [molybdopterin-synthase sulfur-carrier protein]-C-terminal-Gly-aminoethanethioate + L-cysteinyl-[cysteine desulfurase] + A + AMP + 2 H(+). The protein operates within tRNA modification; 5-methoxycarbonylmethyl-2-thiouridine-tRNA biosynthesis. It functions in the pathway cofactor biosynthesis; molybdopterin biosynthesis. In terms of biological role, plays a central role in 2-thiolation of mcm(5)S(2)U at tRNA wobble positions of cytosolic tRNA(Lys), tRNA(Glu) and tRNA(Gln). Also essential during biosynthesis of the molybdenum cofactor. Acts by mediating the C-terminal thiocarboxylation of sulfur carriers URM1 and MOCS2A. Its N-terminus first activates URM1 and MOCS2A as acyl-adenylates (-COAMP), then the persulfide sulfur on the catalytic cysteine is transferred to URM1 and MOCS2A to form thiocarboxylation (-COSH) of their C-terminus. The reaction probably involves hydrogen sulfide that is generated from the persulfide intermediate and that acts as a nucleophile towards URM1 and MOCS2A. Subsequently, a transient disulfide bond is formed. Does not use thiosulfate as sulfur donor; NFS1 probably acting as a sulfur donor for thiocarboxylation reactions. This is Adenylyltransferase and sulfurtransferase MOCS3-2 from Zea mays (Maize).